Reading from the N-terminus, the 307-residue chain is 2-carboxy-1,4-naphthoquinone phytyltransferase (307 aa).

8 consecutive transmembrane segments (helical) span residues 27-47 (MYTVAVVPITVGSAVAYGLTG), 51-71 (GDVFTIFLLSAIAIIAWINLS), 98-118 (LVFLISNFFLLAGVLGLMSMS), 125-145 (TVLELIGVAIFLGYTYQGPPF), 147-167 (LGYLGLGELICLITFGPLAIA), 177-197 (FSWNLLTPSVFVGISTAIILF), 223-243 (LGSQVLTLSVVSLYLITAIGV), and 284-304 (FIAVNLHFFSGMLMAAGYGWA).

The protein belongs to the MenA family. Type 2 subfamily.

The protein localises to the cell inner membrane. The catalysed reaction is 2-carboxy-1,4-naphthoquinone + phytyl diphosphate + H(+) = demethylphylloquinone + CO2 + diphosphate. It functions in the pathway cofactor biosynthesis; phylloquinone biosynthesis. In terms of biological role, involved in the synthesis of phylloquinone (vitamin K1). Catalyzes the transfer of a prenyl chain to 2-carboxy-1,4-naphthoquinone. This is 2-carboxy-1,4-naphthoquinone phytyltransferase from Synechocystis sp. (strain ATCC 27184 / PCC 6803 / Kazusa).